The sequence spans 109 residues: Resistin (109 aa).

Residues 1–18 (MKALSFLFIPVLGLLVCG) form the signal peptide. 5 disulfides stabilise this stretch: cysteine 51–cysteine 104, cysteine 63–cysteine 103, cysteine 72–cysteine 89, cysteine 74–cysteine 91, and cysteine 78–cysteine 93.

Belongs to the resistin/FIZZ family. Homodimer; disulfide-linked.

It localises to the secreted. Its function is as follows. Hormone that seems to suppress insulin ability to stimulate glucose uptake into adipose cells. Potentially links obesity to diabetes. The chain is Resistin (RETN) from Bos taurus (Bovine).